The primary structure comprises 225 residues: Respiratory nitrate reductase 1 gamma chain (225 aa).

Position 1 is an N-formylmethionine (Met-1). Over 1-3 (MQF) the chain is Periplasmic. Residues 4 to 29 (LNMFFFDIYPYIAGAVFLIGSWLRYD) traverse the membrane as a helical segment. Over 30–47 (YGQYTWRAASSQMLDRKG) the chain is Cytoplasmic. A helical membrane pass occupies residues 48-70 (MNLASNLFHIGILGIFVGHFFGM). Residues His-56 and His-66 each contribute to the heme b site. The Periplasmic portion of the chain corresponds to 71 to 82 (LTPHWMYEAWLP). A helical transmembrane segment spans residues 83 to 112 (IEVKQKMAMFAGGASGVLCLIGGVLLLKRR). At 113–124 (LFSPRVRATTTG) the chain is on the cytoplasmic side. Residues 125 to 148 (ADILILSLLVIQCALGLLTIPFSA) traverse the membrane as a helical segment. Topologically, residues 149–182 (QHMDGSEMMKLVGWAQSVVTFHGGASQHLDGVAF) are periplasmic. The helical transmembrane segment at 183 to 198 (IFRLHLVLGMTLFLLF) threads the bilayer. Residues His-187 and His-205 each contribute to the heme b site. The Cytoplasmic segment spans residues 199–225 (PFSRLIHIWSVPVEYLTRKYQLVRARH).

Dimer of heterotrimers each composed of an alpha, a beta and a gamma chain. Alpha and beta are catalytic chains; gamma chains are involved in binding the enzyme complex to the cytoplasmic membrane. Heme serves as cofactor.

The protein resides in the cell inner membrane. It catalyses the reaction nitrate + a quinol = a quinone + nitrite + H2O. In terms of biological role, the nitrate reductase enzyme complex allows E.coli to use nitrate as an electron acceptor during anaerobic growth. The gamma chain is a membrane-embedded heme-iron unit resembling cytochrome b, which transfers electrons from quinones to the beta subunit. The protein is Respiratory nitrate reductase 1 gamma chain (narI) of Escherichia coli (strain K12).